We begin with the raw amino-acid sequence, 240 residues long: DISARM protein DrmC (240 aa).

In terms of domain architecture, PLD phosphodiesterase spans 174–201 (GYSSLHAKVIMVDEEKAFVSSANLSYNG). Active-site residues include histidine 179, lysine 181, and aspartate 186.

It belongs to the phospholipase D family.

The protein localises to the cytoplasm. In terms of biological role, component of antiviral defense system DISARM (defense island system associated with restriction-modification), composed of DrmE, DrmA, DrmB, DrmC and DrmMII. DISARM is probably a multi-gene restriction module, this subunit is probably a phospholipase or nuclease. Expression of DISARM in B.subtilis (strain BEST7003) confers resistance to phages Nf, phi29, phi105, phi3T, SPO1, SPR and SPP1. Protection is over 10(7)-fold against phi3T, 10(4)-10(5)-fold against Nf, phi29, phi105 and SPR, 100-fold against SPO1 and 10-fold against SPP1. DISARM does not interfere with phage adsorption, but instead interferes with (phi3T) DNA replication early in its cycle, preventing replication, circularization and lysogeny and probably causes phage DNA degradation (DNA is degraded in SPP1-infected cells). This Bacillus paralicheniformis (strain ATCC 9945a / NCIMB 11709 / CD-2) protein is DISARM protein DrmC.